A 273-amino-acid chain; its full sequence is 2,3,4,5-tetrahydropyridine-2,6-dicarboxylate N-succinyltransferase (273 aa).

Residues R104 and D141 each coordinate substrate.

Belongs to the transferase hexapeptide repeat family. As to quaternary structure, homotrimer.

The protein resides in the cytoplasm. The enzyme catalyses (S)-2,3,4,5-tetrahydrodipicolinate + succinyl-CoA + H2O = (S)-2-succinylamino-6-oxoheptanedioate + CoA. It participates in amino-acid biosynthesis; L-lysine biosynthesis via DAP pathway; LL-2,6-diaminopimelate from (S)-tetrahydrodipicolinate (succinylase route): step 1/3. This Psychrobacter arcticus (strain DSM 17307 / VKM B-2377 / 273-4) protein is 2,3,4,5-tetrahydropyridine-2,6-dicarboxylate N-succinyltransferase.